The chain runs to 370 residues: Chaperone protein DnaJ (370 aa).

Residues 7–73 (DYYEILGVPR…QKRAMYDRFG (67 aa)) form the J domain. A CR-type zinc finger spans residues 144–226 (GTEIPIEYER…CGGSGRVLRR (83 aa)). Residues Cys157, Cys160, Cys174, Cys177, Cys200, Cys203, Cys214, and Cys217 each contribute to the Zn(2+) site. CXXCXGXG motif repeat units lie at residues 157-164 (CPRCGGTG), 174-181 (CPRCGGTG), 200-207 (CDECGGTG), and 214-221 (CHECGGSG).

Belongs to the DnaJ family. Homodimer. Zn(2+) is required as a cofactor.

It localises to the cytoplasm. Participates actively in the response to hyperosmotic and heat shock by preventing the aggregation of stress-denatured proteins and by disaggregating proteins, also in an autonomous, DnaK-independent fashion. Unfolded proteins bind initially to DnaJ; upon interaction with the DnaJ-bound protein, DnaK hydrolyzes its bound ATP, resulting in the formation of a stable complex. GrpE releases ADP from DnaK; ATP binding to DnaK triggers the release of the substrate protein, thus completing the reaction cycle. Several rounds of ATP-dependent interactions between DnaJ, DnaK and GrpE are required for fully efficient folding. Also involved, together with DnaK and GrpE, in the DNA replication of plasmids through activation of initiation proteins. The protein is Chaperone protein DnaJ of Thermotoga neapolitana (strain ATCC 49049 / DSM 4359 / NBRC 107923 / NS-E).